We begin with the raw amino-acid sequence, 760 residues long: Dipeptidyl peptidase 4 (760 aa).

The Cytoplasmic segment spans residues 1–6 (MKTPWK). Residues 7–28 (VLLGLLGVAALVTIITVPIVLL) traverse the membrane as a helical; Signal-anchor for type II membrane protein segment. The Extracellular segment spans residues 29–760 (SKDEAAADSR…HFLQQCFSLH (732 aa)). N-linked (GlcNAc...) asparagine glycans are attached at residues Asn83, Asn90, Asn144, Asn213, Asn223, Asn315, and Asn328. Cystine bridges form between Cys322-Cys333, Cys379-Cys388, Cys438-Cys441, and Cys448-Cys466. Residue Asn514 is glycosylated (N-linked (GlcNAc...) asparagine). The active-site Charge relay system is Ser624. Cys643 and Cys756 form a disulfide bridge. Asn679 carries an N-linked (GlcNAc...) asparagine glycan. Residues Asp702 and His734 each act as charge relay system in the active site.

The protein belongs to the peptidase S9B family. DPPIV subfamily. Monomer. Homodimer. Heterodimer with Seprase (FAP). Requires homodimerization for optimal dipeptidyl peptidase activity and T-cell costimulation. Found in a membrane raft complex, at least composed of BCL10, CARD11, DPP4 and IKBKB. Associates with collagen. Interacts with PTPRC; the interaction is enhanced in an interleukin-12-dependent manner in activated lymphocytes. Interacts (via extracellular domain) with ADA; does not inhibit its dipeptidyl peptidase activity. Interacts with CAV1 (via the N-terminus); the interaction is direct. Interacts (via cytoplasmic tail) with CARD11 (via PDZ domain); its homodimerization is necessary for interaction with CARD11. Interacts with IGF2R; the interaction is direct. Interacts with GPC3. In terms of processing, the soluble form (Dipeptidyl peptidase 4 soluble form also named SDPP) derives from the membrane form (Dipeptidyl peptidase 4 membrane form also named MDPP) by proteolytic processing. Post-translationally, N- and O-Glycosylated. Phosphorylated. Mannose 6-phosphate residues in the carbohydrate moiety are necessary for interaction with IGF2R in activated T-cells. Mannose 6-phosphorylation is induced during T-cell activation.

Its subcellular location is the secreted. It is found in the cell membrane. The protein resides in the apical cell membrane. It localises to the cell projection. The protein localises to the invadopodium membrane. Its subcellular location is the lamellipodium membrane. It is found in the cell junction. The protein resides in the membrane raft. The enzyme catalyses Release of an N-terminal dipeptide, Xaa-Yaa-|-Zaa-, from a polypeptide, preferentially when Yaa is Pro, provided Zaa is neither Pro nor hydroxyproline.. Its activity is regulated as follows. Inhibited by GPC3 and diprotin A. Cell surface glycoprotein receptor involved in the costimulatory signal essential for T-cell receptor (TCR)-mediated T-cell activation. Acts as a positive regulator of T-cell coactivation, by binding at least ADA, CAV1, IGF2R, and PTPRC. Its binding to CAV1 and CARD11 induces T-cell proliferation and NF-kappa-B activation in a T-cell receptor/CD3-dependent manner. Its interaction with ADA also regulates lymphocyte-epithelial cell adhesion. In association with FAP is involved in the pericellular proteolysis of the extracellular matrix (ECM), the migration and invasion of endothelial cells into the ECM. May be involved in the promotion of lymphatic endothelial cells adhesion, migration and tube formation. When overexpressed, enhanced cell proliferation, a process inhibited by GPC3. Also acts as a serine exopeptidase with a dipeptidyl peptidase activity that regulates various physiological processes by cleaving peptides in the circulation, including many chemokines, mitogenic growth factors, neuropeptides and peptide hormones. Removes N-terminal dipeptides sequentially from polypeptides having unsubstituted N-termini provided that the penultimate residue is proline. The sequence is that of Dipeptidyl peptidase 4 (Dpp4) from Mus musculus (Mouse).